Reading from the N-terminus, the 335-residue chain is Acyl-CoA Delta(11) desaturase (335 aa).

3 helical membrane-spanning segments follow: residues leucine 39–serine 59, threonine 64–histidine 84, and leucine 98–isoleucine 118. The Histidine box-1 motif lies at histidine 84 to histidine 89. The Histidine box-2 signature appears at histidine 121–histidine 125. 2 helical membrane-spanning segments follow: residues alanine 182–tryptophan 202 and threonine 213–glycine 235. The Histidine box-3 motif lies at histidine 261–histidine 265. A disordered region spans residues methionine 312–glutamine 335. The span at valine 321–glutamine 335 shows a compositional bias: polar residues.

Belongs to the fatty acid desaturase type 1 family. It depends on Fe cation as a cofactor. In terms of tissue distribution, detected in pheromone gland.

The protein localises to the membrane. It catalyses the reaction an 11,12-saturated fatty acyl-CoA + 2 Fe(II)-[cytochrome b5] + O2 + 2 H(+) = an (11Z)-Delta(11)-fatty acyl-CoA + 2 Fe(III)-[cytochrome b5] + 2 H2O. Functionally, catalyzes the formation of Delta(11) fatty acyl precursors in the pheromone gland, with a preference for myristic acid. This chain is Acyl-CoA Delta(11) desaturase, found in Choristoneura rosaceana (Oblique banded leafroller).